The chain runs to 62 residues: Photosystem II reaction center protein Z (62 aa).

A run of 2 helical transmembrane segments spans residues 8–28 and 41–61; these read AVFA…VVLA and FSGA…NSFI.

The protein belongs to the PsbZ family. As to quaternary structure, PSII is composed of 1 copy each of membrane proteins PsbA, PsbB, PsbC, PsbD, PsbE, PsbF, PsbH, PsbI, PsbJ, PsbK, PsbL, PsbM, PsbT, PsbY, PsbZ, Psb30/Ycf12, at least 3 peripheral proteins of the oxygen-evolving complex and a large number of cofactors. It forms dimeric complexes.

The protein localises to the plastid. It localises to the chloroplast thylakoid membrane. Functionally, may control the interaction of photosystem II (PSII) cores with the light-harvesting antenna, regulates electron flow through the 2 photosystem reaction centers. PSII is a light-driven water plastoquinone oxidoreductase, using light energy to abstract electrons from H(2)O, generating a proton gradient subsequently used for ATP formation. This Marchantia polymorpha (Common liverwort) protein is Photosystem II reaction center protein Z.